Consider the following 373-residue polypeptide: NK1 transcription factor-related protein 1 (373 aa).

Disordered stretches follow at residues 49-74 (ALPAESRETSPRHEPVPAGAPPTVHR), 149-231 (SDFT…RRAR), and 281-328 (KWKK…SMHT). A compositionally biased stretch (basic and acidic residues) spans 53–63 (ESRETSPRHEP). The span at 168–177 (EESSALTGNN) shows a compositional bias: polar residues. Low complexity predominate over residues 196-210 (GQQTQQSSSNGQNHQ). Positions 227 to 286 (PRRARTAFTYEQLVALENKFKSTRYLSVCERLNLALSLSLTETQVKIWFQNRRTKWKKQN) form a DNA-binding region, homeobox. Positions 296–310 (SGGGGGNGPSNGLGG) are enriched in gly residues.

The protein belongs to the NK-1 homeobox family.

It localises to the nucleus. Its function is as follows. May participate in the energy homeostasis regulation. The sequence is that of NK1 transcription factor-related protein 1 from Danio rerio (Zebrafish).